Here is a 299-residue protein sequence, read N- to C-terminus: MPT51/MPB51 antigen (299 aa).

A signal peptide spans 1-26; sequence MKGRSALLRALWIAALSFGLGGVAVA.

It belongs to the mycobacterial A85 antigen family. As to quaternary structure, homodimer.

Its subcellular location is the secreted. Its function is as follows. May have a role in host tissue attachment, whereby ligands may include the serum protein fibronectin and small sugars. This Mycobacterium bovis (strain ATCC BAA-935 / AF2122/97) protein is MPT51/MPB51 antigen (mpt51).